The sequence spans 113 residues: Protein ORF3 (113 aa).

Hydrophobic regions lie at residues 1–21 (MGSPCALGLFCCCSSCFCLCC) and 32–52 (AVVGGAAAVPAVVSGVTGLIL). An interaction with host HPX region spans residues 27–67 (ASRLAAVVGGAAAVPAVVSGVTGLILSPSPSPIFIQPTPSP). Residues 47 to 71 (VTGLILSPSPSPIFIQPTPSPPMSF) are interaction with the capsid protein. The residue at position 70 (Ser-70) is a Phosphoserine; by host. A homodimerization, and interaction with host AMBP/bikunin region spans residues 71–113 (FHNPGLELALDSRPAPLXPLGVTSPSAPPLPPVVDLPQLGLRR). Residues 90 to 113 (LGVTSPSAPPLPPVVDLPQLGLRR) are disordered. Residues 94-103 (SPSAPPLPPV) form an interaction with host SRC, HCK, FYN, PIK3R3 and GRB2 region. The short motif at 95-98 (PSAP) is the PTAP/PSAP motif element.

This sequence belongs to the hepevirus ORF3 protein family. In terms of assembly, forms homooligomers. Interacts with host SRC, HCK, FYN, PIK3R3 and GRB2 (via SH3 domain); binding does not activate the kinases. Interacts with host AMBP/bikunin and AMBP/alpha-1-microglobulin peptides. Interacts with host HPX/hemopexin. Interacts (when phosphorylated) with capsid protein ORF2. Interacts with host TSG101; this interaction plays a role in viral release from the host cell. Interacts with host SIRPA; this interaction down-regulates the phosphorylation of host IRF3. In terms of processing, palmitoylated in the N-terminus.

The protein localises to the host endoplasmic reticulum membrane. Its subcellular location is the host cytoplasm. The protein resides in the host cytoskeleton. It localises to the virion. It is found in the host cell membrane. Small multifunctional phosphoprotein involved in virion morphogenesis, egress and counteracting host innate immunity. Plays critical roles in the final steps of viral release by interacting with host TSG101, a member of the vacuolar protein-sorting pathway and using other cellular host proteins involved in vesicle formation pathway. Also acts as a viroporin and forms ion conductive pores allowing viral particle release. Impairs the generation of type I interferon by down-regulating host TLR3 and TLR7 as well as their downstream signaling pathways. Down-regulates the phosphorylation of host IRF3 via the interaction with host SIRP-alpha, thereby inhibiting IFN-I expression. Interacts with host microtubules. This Hepatitis E virus genotype 3 (isolate Human/United States/US2) (HEV-3) protein is Protein ORF3.